The chain runs to 161 residues: MKCPYCGARDARVIDSRELNGGESIRRRRECIACGRRFTTYERVEPIWLMVVKRDGRREPFDVGKLREGLRLALKKRPVSPDEIDRIVATVERELQSLGTSEVPSTLIGEIVLRELKQLDDVAYIRFASVYRRFADLEDLRREMEALGWRPRAAVTVDETS.

The segment at 3–34 (CPYCGARDARVIDSRELNGGESIRRRRECIAC) is a zinc-finger region. The region spanning 49-139 (LMVVKRDGRR…VYRRFADLED (91 aa)) is the ATP-cone domain.

It belongs to the NrdR family. Zn(2+) is required as a cofactor.

Negatively regulates transcription of bacterial ribonucleotide reductase nrd genes and operons by binding to NrdR-boxes. This chain is Transcriptional repressor NrdR, found in Thermomicrobium roseum (strain ATCC 27502 / DSM 5159 / P-2).